A 28-amino-acid chain; its full sequence is Cycloviolin-B (28 aa).

Residues 1 to 28 (GTACGESCYVLPCFTVGCTCTSSQCFKN) constitute a cross-link (cyclopeptide (Gly-Asn)). Intrachain disulfides connect C4/C18, C8/C20, and C13/C25.

This is a cyclic peptide.

Probably participates in a plant defense mechanism. Has anti-HIV activity. The protein is Cycloviolin-B of Leonia cymosa (Sacha uba).